A 303-amino-acid chain; its full sequence is AP2-like ethylene-responsive transcription factor At1g79700 (303 aa).

Positions 1–10 are enriched in basic residues; the sequence is MAKVSGRSKK. The tract at residues 1–55 is disordered; that stretch reads MAKVSGRSKKTIVDDEISDKTASASESASIALTSKRKRKSPPRNAPLQRSSPYRG. A compositionally biased stretch (polar residues) spans 20-32; sequence KTASASESASIAL. 2 DNA-binding regions (AP2/ERF) span residues 52 to 118 and 154 to 202; these read PYRG…LNFP and KYRG…TNFD. The tract at residues 212 to 259 is disordered; sequence AADKADSDSKPIRSPSREPESSDDNKSPKSEEVIEPSTSPEVIPTRRS. Basic and acidic residues predominate over residues 214 to 243; sequence DKADSDSKPIRSPSREPESSDDNKSPKSEE.

This sequence belongs to the AP2/ERF transcription factor family. AP2 subfamily.

It is found in the nucleus. Its function is as follows. Probably acts as a transcriptional activator. Binds to the GCC-box pathogenesis-related promoter element. May be involved in the regulation of gene expression by stress factors and by components of stress signal transduction pathways. This chain is AP2-like ethylene-responsive transcription factor At1g79700, found in Arabidopsis thaliana (Mouse-ear cress).